The chain runs to 454 residues: MASVVLRNPSSKRLVPFSSQIYSRCGASVTSSYSISHSIGGDDLSSSTFGTSSFWRSMATFTRNKPHVNVGTIGHVDHGKTTLTAAITKVLAEEGKAKAIAFDEIDKAPEEKKRGITIATAHVEYETAKRHYAHVDCPGHADYVKNMITGAAQMDGGILVVSGPDGPMPQTKEHILLARQVGVPSLVCFLNKVDVVDDPELLELVEMELRELLSFYKFPGDDIPIIRGSALSALQGTNDEIGRQAILKLMDAVDEYIPDPVRVLDKPFLMPIEDVFSIQGRGTVATGRIEQGVIKVGEEVEILGLREGGVPLKSTVTGVEMFKKILDNGQAGDNVGLLLRGLKREDIQRGMVIAKPGSCKTYKKFEAEIYVLTKDEGGRHTAFFSNYRPQFYLRTADITGKVELPENVKMVMPGDNVTAVFELIMPVPLETGQRFALREGGRTVGAGVVSKVMT.

The N-terminal 51 residues, 1-51 (MASVVLRNPSSKRLVPFSSQIYSRCGASVTSSYSISHSIGGDDLSSSTFGT), are a transit peptide targeting the mitochondrion. A tr-type G domain is found at 65 to 261 (KPHVNVGTIG…AVDEYIPDPV (197 aa)). Residues 74–81 (GHVDHGKT) form a G1 region. Position 74-81 (74-81 (GHVDHGKT)) interacts with GTP. Thr-82 is subject to Phosphothreonine. Positions 115–119 (GITIA) are G2. Residues 136-139 (DCPG) are G3. GTP contacts are provided by residues 136–140 (DCPGH) and 191–194 (NKVD). The tract at residues 191–194 (NKVD) is G4. Residues 229–231 (SAL) are G5.

This sequence belongs to the TRAFAC class translation factor GTPase superfamily. Classic translation factor GTPase family. EF-Tu/EF-1A subfamily.

The protein resides in the mitochondrion. This protein promotes the GTP-dependent binding of aminoacyl-tRNA to the A-site of ribosomes during protein biosynthesis. This is Elongation factor Tu, mitochondrial (TUFA) from Arabidopsis thaliana (Mouse-ear cress).